The chain runs to 449 residues: tRNA-2-methylthio-N(6)-dimethylallyladenosine synthase (449 aa).

The MTTase N-terminal domain occupies 4–119; it reads RTFHIETFGC…APQALDRLVE (116 aa). Residues cysteine 13, cysteine 48, cysteine 82, cysteine 158, cysteine 162, and cysteine 165 each contribute to the [4Fe-4S] cluster site. The Radical SAM core domain occupies 144 to 375; the sequence is GAVPASVFVN…QTLQNRLTER (232 aa). The 69-residue stretch at 378 to 446 folds into the TRAM domain; it reads QDMVGKKVEV…KHSLLAEQAG (69 aa).

This sequence belongs to the methylthiotransferase family. MiaB subfamily. As to quaternary structure, monomer. Requires [4Fe-4S] cluster as cofactor.

The protein localises to the cytoplasm. It carries out the reaction N(6)-dimethylallyladenosine(37) in tRNA + (sulfur carrier)-SH + AH2 + 2 S-adenosyl-L-methionine = 2-methylsulfanyl-N(6)-dimethylallyladenosine(37) in tRNA + (sulfur carrier)-H + 5'-deoxyadenosine + L-methionine + A + S-adenosyl-L-homocysteine + 2 H(+). Catalyzes the methylthiolation of N6-(dimethylallyl)adenosine (i(6)A), leading to the formation of 2-methylthio-N6-(dimethylallyl)adenosine (ms(2)i(6)A) at position 37 in tRNAs that read codons beginning with uridine. This chain is tRNA-2-methylthio-N(6)-dimethylallyladenosine synthase, found in Nitratidesulfovibrio vulgaris (strain DP4) (Desulfovibrio vulgaris).